The following is a 672-amino-acid chain: Glycogen [starch] synthase (672 aa).

A UDP-alpha-D-glucose-binding site is contributed by K56. The tract at residues 645–672 is disordered; the sequence is MRDNEGKVPSAATSRRPSIHSSDGEDDE. Residues 655-665 show a composition bias toward polar residues; the sequence is AATSRRPSIHS.

This sequence belongs to the glycosyltransferase 3 family. Forms a hetero-octamer with each protomer of the gsy-1 homotetramer bound to one molecule of gyg-1. The N-terminus is involved in interprotomer contacts with gyg-1. The interaction with gyg-1 is required for glycogen production but is not required for gsy-1 intrinsic activity.

It catalyses the reaction [(1-&gt;4)-alpha-D-glucosyl](n) + UDP-alpha-D-glucose = [(1-&gt;4)-alpha-D-glucosyl](n+1) + UDP + H(+). The protein operates within glycan biosynthesis; glycogen biosynthesis. Transfers the glycosyl residue from UDP-Glc to the non-reducing end of alpha-1,4-glucan. In Caenorhabditis elegans, this protein is Glycogen [starch] synthase.